A 145-amino-acid polypeptide reads, in one-letter code: UPF0310 protein Mvan_0064 (145 aa).

The protein belongs to the UPF0310 family.

The polypeptide is UPF0310 protein Mvan_0064 (Mycolicibacterium vanbaalenii (strain DSM 7251 / JCM 13017 / BCRC 16820 / KCTC 9966 / NRRL B-24157 / PYR-1) (Mycobacterium vanbaalenii)).